A 158-amino-acid polypeptide reads, in one-letter code: 2-C-methyl-D-erythritol 2,4-cyclodiphosphate synthase (158 aa).

A divalent metal cation contacts are provided by D9 and H11. 4-CDP-2-C-methyl-D-erythritol 2-phosphate contacts are provided by residues 9-11 (DVH) and 35-36 (HS). H43 is a binding site for a divalent metal cation. Residues 57–59 (DIG), 62–66 (FPDTD), 133–136 (TTTE), F140, and R143 contribute to the 4-CDP-2-C-methyl-D-erythritol 2-phosphate site.

It belongs to the IspF family. As to quaternary structure, homotrimer. A divalent metal cation is required as a cofactor.

It catalyses the reaction 4-CDP-2-C-methyl-D-erythritol 2-phosphate = 2-C-methyl-D-erythritol 2,4-cyclic diphosphate + CMP. The protein operates within isoprenoid biosynthesis; isopentenyl diphosphate biosynthesis via DXP pathway; isopentenyl diphosphate from 1-deoxy-D-xylulose 5-phosphate: step 4/6. Involved in the biosynthesis of isopentenyl diphosphate (IPP) and dimethylallyl diphosphate (DMAPP), two major building blocks of isoprenoid compounds. Catalyzes the conversion of 4-diphosphocytidyl-2-C-methyl-D-erythritol 2-phosphate (CDP-ME2P) to 2-C-methyl-D-erythritol 2,4-cyclodiphosphate (ME-CPP) with a corresponding release of cytidine 5-monophosphate (CMP). The chain is 2-C-methyl-D-erythritol 2,4-cyclodiphosphate synthase from Haemophilus influenzae (strain PittEE).